The primary structure comprises 474 residues: Glutamyl-tRNA(Gln) amidotransferase subunit A (474 aa).

Catalysis depends on charge relay system residues lysine 76 and serine 151. Residue serine 175 is the Acyl-ester intermediate of the active site.

Belongs to the amidase family. GatA subfamily. In terms of assembly, heterotrimer of A, B and C subunits.

It carries out the reaction L-glutamyl-tRNA(Gln) + L-glutamine + ATP + H2O = L-glutaminyl-tRNA(Gln) + L-glutamate + ADP + phosphate + H(+). In terms of biological role, allows the formation of correctly charged Gln-tRNA(Gln) through the transamidation of misacylated Glu-tRNA(Gln) in organisms which lack glutaminyl-tRNA synthetase. The reaction takes place in the presence of glutamine and ATP through an activated gamma-phospho-Glu-tRNA(Gln). This Chlorobium limicola (strain DSM 245 / NBRC 103803 / 6330) protein is Glutamyl-tRNA(Gln) amidotransferase subunit A.